A 194-amino-acid polypeptide reads, in one-letter code: MSQIKLIVGLANSGTKYEDTRHNAGEWLINEIARQFNVSLKEEAKFFGKVAKINAAGGEVRLLVPTTFMNLSGKAVGALANFYRIKPEEILVAHDELDLPPGVAKIKQGGGHGGHNGLKDIIASLGNSNNFYRVRIGIGHPGSKELVAGYVLGKPSPQDQEKINAAVDEAGRCVDLLLKDGITKATNRLNAFKA.

TRNA is bound at residue tyrosine 17. Histidine 22 functions as the Proton acceptor in the catalytic mechanism. Positions 68, 70, and 116 each coordinate tRNA.

It belongs to the PTH family. As to quaternary structure, monomer.

Its subcellular location is the cytoplasm. The catalysed reaction is an N-acyl-L-alpha-aminoacyl-tRNA + H2O = an N-acyl-L-amino acid + a tRNA + H(+). In terms of biological role, hydrolyzes ribosome-free peptidyl-tRNAs (with 1 or more amino acids incorporated), which drop off the ribosome during protein synthesis, or as a result of ribosome stalling. Its function is as follows. Catalyzes the release of premature peptidyl moieties from peptidyl-tRNA molecules trapped in stalled 50S ribosomal subunits, and thus maintains levels of free tRNAs and 50S ribosomes. The polypeptide is Peptidyl-tRNA hydrolase (Actinobacillus pleuropneumoniae serotype 7 (strain AP76)).